We begin with the raw amino-acid sequence, 133 residues long: Small ribosomal subunit protein uS8c (133 aa).

Disordered regions lie at residues 1-23 and 44-133; these read MGND…GAET and FSGN…HVWR. Polar residues-rich tracts occupy residues 12–23 and 55–66; these read APRNASSRGAET and TNRFPVSTSKYQ. The span at 67 to 81 shows a compositional bias: basic residues; it reads GRTRKARITTRRRVS. The segment covering 114–133 has biased composition (basic and acidic residues); that stretch reads TDREARQKRIGGEAPRHVWR.

The protein belongs to the universal ribosomal protein uS8 family. As to quaternary structure, part of the 30S ribosomal subunit.

It localises to the plastid. The protein resides in the chloroplast. One of the primary rRNA binding proteins, it binds directly to 16S rRNA central domain where it helps coordinate assembly of the platform of the 30S subunit. This Selaginella uncinata (Blue spike-moss) protein is Small ribosomal subunit protein uS8c (rps8).